The chain runs to 62 residues: Large ribosomal subunit protein uL30 (62 aa).

This sequence belongs to the universal ribosomal protein uL30 family. In terms of assembly, part of the 50S ribosomal subunit.

The polypeptide is Large ribosomal subunit protein uL30 (Polynucleobacter asymbioticus (strain DSM 18221 / CIP 109841 / QLW-P1DMWA-1) (Polynucleobacter necessarius subsp. asymbioticus)).